The chain runs to 190 residues: Probable thymidylate kinase (190 aa).

Position 9–16 (9–16 (GIDGAGKT)) interacts with ATP.

It belongs to the thymidylate kinase family.

The catalysed reaction is dTMP + ATP = dTDP + ADP. The protein is Probable thymidylate kinase (tmk1) of Sulfurisphaera tokodaii (strain DSM 16993 / JCM 10545 / NBRC 100140 / 7) (Sulfolobus tokodaii).